Here is a 331-residue protein sequence, read N- to C-terminus: Adenosine deaminase (331 aa).

Zn(2+) is bound by residues histidine 12 and histidine 14. Residues histidine 14 and aspartate 16 each coordinate substrate. A Zn(2+)-binding site is contributed by histidine 197. The active-site Proton donor is the glutamate 200. Residue aspartate 278 participates in Zn(2+) binding.

It belongs to the metallo-dependent hydrolases superfamily. Adenosine and AMP deaminases family. Adenosine deaminase subfamily. Requires Zn(2+) as cofactor.

The catalysed reaction is adenosine + H2O + H(+) = inosine + NH4(+). The enzyme catalyses 2'-deoxyadenosine + H2O + H(+) = 2'-deoxyinosine + NH4(+). In terms of biological role, catalyzes the hydrolytic deamination of adenosine and 2-deoxyadenosine. The chain is Adenosine deaminase from Shewanella halifaxensis (strain HAW-EB4).